A 289-amino-acid polypeptide reads, in one-letter code: uncharacterized protein (289 aa).

This is an uncharacterized protein from Escherichia coli (strain K12).